The primary structure comprises 130 residues: UPF0212 protein PF1486 (130 aa).

It belongs to the UPF0212 family.

The polypeptide is UPF0212 protein PF1486 (Pyrococcus furiosus (strain ATCC 43587 / DSM 3638 / JCM 8422 / Vc1)).